The sequence spans 424 residues: Histidine--tRNA ligase (424 aa).

Residues 1 to 22 form a disordered region; it reads MSYRRPKGTYDVYPGDAARQEP.

Belongs to the class-II aminoacyl-tRNA synthetase family. As to quaternary structure, homodimer.

Its subcellular location is the cytoplasm. It catalyses the reaction tRNA(His) + L-histidine + ATP = L-histidyl-tRNA(His) + AMP + diphosphate + H(+). In Rubrobacter xylanophilus (strain DSM 9941 / JCM 11954 / NBRC 16129 / PRD-1), this protein is Histidine--tRNA ligase.